A 177-amino-acid polypeptide reads, in one-letter code: Large ribosomal subunit protein uL10 (177 aa).

The protein belongs to the universal ribosomal protein uL10 family. As to quaternary structure, part of the ribosomal stalk of the 50S ribosomal subunit. The N-terminus interacts with L11 and the large rRNA to form the base of the stalk. The C-terminus forms an elongated spine to which L12 dimers bind in a sequential fashion forming a multimeric L10(L12)X complex.

In terms of biological role, forms part of the ribosomal stalk, playing a central role in the interaction of the ribosome with GTP-bound translation factors. This chain is Large ribosomal subunit protein uL10, found in Xanthomonas campestris pv. campestris (strain 8004).